A 229-amino-acid chain; its full sequence is Extracellular endonuclease (229 aa).

An N-terminal signal peptide occupies residues 1-19 (MSARFIAVFCLFFTVTAHA). Positions 69 to 95 (RADASNGNTSSRPGRSGISASAGKPVG) are disordered. Residues 71-81 (DASNGNTSSRP) are compositionally biased toward polar residues.

Belongs to the EndA/NucM nuclease family.

It localises to the secreted. In Pseudomonas fluorescens biotype A, this protein is Extracellular endonuclease (endX).